A 185-amino-acid chain; its full sequence is MSGDVVAELKGRIDKSLEGLRTDLTRVRTGRASIAILEGVRVDYYGTPTPLSGVASVNAPEPRLITIKPWEKSVLKDIEKALREANLGINPMNDGEMIRLPFPPLTEERRKDIAKQVKTKGEEFKVTIRNLRRDANEVLKTQLKDKKITEDDHKRITEVVQKQTDAGITQVDEIVKKKEKEVMEV.

This sequence belongs to the RRF family.

Its subcellular location is the cytoplasm. In terms of biological role, responsible for the release of ribosomes from messenger RNA at the termination of protein biosynthesis. May increase the efficiency of translation by recycling ribosomes from one round of translation to another. This Myxococcus xanthus (strain DK1622) protein is Ribosome-recycling factor.